The sequence spans 219 residues: Mediator of RNA polymerase II transcription subunit 20b (219 aa).

This sequence belongs to the Mediator complex subunit 20 family. In terms of assembly, component of the Mediator complex.

Its subcellular location is the nucleus. Its function is as follows. Component of the Mediator complex, a coactivator involved in the regulated transcription of nearly all RNA polymerase II-dependent genes. Mediator functions as a bridge to convey information from gene-specific regulatory proteins to the basal RNA polymerase II transcription machinery. The Mediator complex, having a compact conformation in its free form, is recruited to promoters by direct interactions with regulatory proteins and serves for the assembly of a functional preinitiation complex with RNA polymerase II and the general transcription factors. The chain is Mediator of RNA polymerase II transcription subunit 20b (MED20B) from Arabidopsis thaliana (Mouse-ear cress).